The following is a 1224-amino-acid chain: ATP-dependent helicase/nuclease subunit A (1224 aa).

In terms of domain architecture, UvrD-like helicase ATP-binding spans 15–480; the sequence is VIWTDAQWQS…IDLSQNFRSR (466 aa). 36-43 serves as a coordination point for ATP; it reads AAAGSGKT. The UvrD-like helicase C-terminal domain occupies 497-791; sequence EQVGEISYDD…RMMTIHSSKG (295 aa).

The protein belongs to the helicase family. AddA subfamily. In terms of assembly, heterodimer of AddA and AddB/RexB. Mg(2+) serves as cofactor.

It catalyses the reaction Couples ATP hydrolysis with the unwinding of duplex DNA by translocating in the 3'-5' direction.. The catalysed reaction is ATP + H2O = ADP + phosphate + H(+). Functionally, the heterodimer acts as both an ATP-dependent DNA helicase and an ATP-dependent, dual-direction single-stranded exonuclease. Recognizes the chi site generating a DNA molecule suitable for the initiation of homologous recombination. The AddA nuclease domain is required for chi fragment generation; this subunit has the helicase and 3' -&gt; 5' nuclease activities. In Staphylococcus epidermidis (strain ATCC 12228 / FDA PCI 1200), this protein is ATP-dependent helicase/nuclease subunit A.